A 293-amino-acid polypeptide reads, in one-letter code: Probable porphobilinogen deaminase (293 aa).

C233 carries the post-translational modification S-(dipyrrolylmethanemethyl)cysteine.

This sequence belongs to the HMBS family. Dipyrromethane serves as cofactor.

The enzyme catalyses 4 porphobilinogen + H2O = hydroxymethylbilane + 4 NH4(+). Its pathway is porphyrin-containing compound metabolism; protoporphyrin-IX biosynthesis; coproporphyrinogen-III from 5-aminolevulinate: step 2/4. Functionally, tetrapolymerization of the monopyrrole PBG into the hydroxymethylbilane pre-uroporphyrinogen in several discrete steps. The polypeptide is Probable porphobilinogen deaminase (Saccharolobus islandicus (strain Y.N.15.51 / Yellowstone #2) (Sulfolobus islandicus)).